The chain runs to 698 residues: MARTTPIERYRNIGICAHVDAGKTTTTERVLFYTGLSHKIGEVHDGAATTDWMVQEQERGITITSAAVTTFWRGMDAQFTEHRINIIDTPGHVDFTIEVERSLRVLDGAVVVFCGASGVEPQSETVWRQADKYRVPRIVFVNKMDRAGADFERVVKQIRTRLGATCVPIQLNIGAEENFTGVIDLIKMKAINWNEADQGMTFSYEAIPAHLTAKAEEMHEFLVEAAAEASDELMDKYLEEGTLSEEEIKKALRQRTINNEIVLATCGSAFKNKGVQAVLDAVVEFLPAPVDVPPIKGIDDNEQEVERPSDDNAPFAALAFKIATDPFVGTLTFIRVYSGVLESGSGVYNSVKQKRERIGRIVQMHANDRTELKEVRAGDIAAAIGLKEVTTGDTLCDNDHKVILERMEFPEPVITIAVEPKSKADQDKMGIALQKLAAEDPSFRVETDEESSQTLISGMGELHLDIIVDRMRREFGVECNVGKPQVAYRETIRGSVEAEGKFVRQSGGRGQFGHVWLKLEPNEEGAGYEFINAIVGGVVPREFIPAVDKGIQEQMKNGVLAGFPVLDVKVTLFDGSYHDVDSNEMAFKIAGSMGFKKGALEAKPVLLEPCMKVEVTTPENYMGDVVGDLNRRRGLIEGMDDGFGGIKIIHAVVPLSEMFGYATDLRSATQGRASYSMEFLKYTDAPQNIAKAIIESRS.

In terms of domain architecture, tr-type G spans Glu8–Val290. GTP-binding positions include Ala17–Thr24, Asp88–His92, and Asn142–Asp145.

This sequence belongs to the TRAFAC class translation factor GTPase superfamily. Classic translation factor GTPase family. EF-G/EF-2 subfamily.

The protein localises to the cytoplasm. In terms of biological role, catalyzes the GTP-dependent ribosomal translocation step during translation elongation. During this step, the ribosome changes from the pre-translocational (PRE) to the post-translocational (POST) state as the newly formed A-site-bound peptidyl-tRNA and P-site-bound deacylated tRNA move to the P and E sites, respectively. Catalyzes the coordinated movement of the two tRNA molecules, the mRNA and conformational changes in the ribosome. The polypeptide is Elongation factor G 1 (Shewanella oneidensis (strain ATCC 700550 / JCM 31522 / CIP 106686 / LMG 19005 / NCIMB 14063 / MR-1)).